The following is a 99-amino-acid chain: uncharacterized protein (99 aa).

Residues 1-17 (MMMNAFFPAMALIVLVG) form the signal peptide. The N-palmitoyl cysteine moiety is linked to residue C18. Residue C18 is the site of S-diacylglycerol cysteine attachment.

The protein resides in the cell membrane. This is an uncharacterized protein from Escherichia coli (strain UTI89 / UPEC).